The sequence spans 81 residues: Cytochrome b559 subunit alpha (81 aa).

The helical transmembrane segment at 22-36 threads the bilayer; it reads VIHSITIPSLFIAGW. His-24 provides a ligand contact to heme.

Belongs to the PsbE/PsbF family. Heterodimer of an alpha subunit and a beta subunit. PSII is composed of 1 copy each of membrane proteins PsbA, PsbB, PsbC, PsbD, PsbE, PsbF, PsbH, PsbI, PsbJ, PsbK, PsbL, PsbM, PsbT, PsbX, PsbY, PsbZ, Psb30/Ycf12, at least 3 peripheral proteins of the oxygen-evolving complex and a large number of cofactors. It forms dimeric complexes. The cofactor is heme b.

The protein resides in the plastid. It localises to the chloroplast thylakoid membrane. Functionally, this b-type cytochrome is tightly associated with the reaction center of photosystem II (PSII). PSII is a light-driven water:plastoquinone oxidoreductase that uses light energy to abstract electrons from H(2)O, generating O(2) and a proton gradient subsequently used for ATP formation. It consists of a core antenna complex that captures photons, and an electron transfer chain that converts photonic excitation into a charge separation. In Cyanidioschyzon merolae (strain NIES-3377 / 10D) (Unicellular red alga), this protein is Cytochrome b559 subunit alpha.